A 410-amino-acid chain; its full sequence is Peptidase T (410 aa).

His-79 provides a ligand contact to Zn(2+). The active site involves Asp-81. Position 142 (Asp-142) interacts with Zn(2+). Residue Glu-176 is the Proton acceptor of the active site. Zn(2+) is bound by residues Glu-177, Asp-199, and His-381.

The protein belongs to the peptidase M20B family. It depends on Zn(2+) as a cofactor.

The protein localises to the cytoplasm. The catalysed reaction is Release of the N-terminal residue from a tripeptide.. In terms of biological role, cleaves the N-terminal amino acid of tripeptides. This is Peptidase T from Bacillus thuringiensis (strain Al Hakam).